Reading from the N-terminus, the 131-residue chain is D-ribose pyranase (131 aa).

His-20 serves as the catalytic Proton donor. Residues Asp-28, His-98, and Tyr-120–Asn-122 each bind substrate.

It belongs to the RbsD / FucU family. RbsD subfamily. Homodecamer.

The protein localises to the cytoplasm. It catalyses the reaction beta-D-ribopyranose = beta-D-ribofuranose. It participates in carbohydrate metabolism; D-ribose degradation; D-ribose 5-phosphate from beta-D-ribopyranose: step 1/2. Its function is as follows. Catalyzes the interconversion of beta-pyran and beta-furan forms of D-ribose. This is D-ribose pyranase from Clostridium botulinum (strain Eklund 17B / Type B).